Consider the following 1004-residue polypeptide: Presequence protease, mitochondrial (1004 aa).

Residues 1–34 (MLRNAAAGARKAVTELSQFPKPGEKLHGFTLVRS) constitute a mitochondrion transit peptide. H84 serves as a coordination point for Zn(2+). The active-site Proton acceptor is the E87. H88 provides a ligand contact to Zn(2+). E160 is an active-site residue. E188 provides a ligand contact to Zn(2+).

This sequence belongs to the peptidase M16 family. PreP subfamily. Monomer and homodimer; homodimerization is induced by binding of the substrate. It depends on Zn(2+) as a cofactor.

It localises to the mitochondrion intermembrane space. It is found in the mitochondrion matrix. Degrades mitochondrial transit peptides after their cleavage in the intermembrane space or in the matrix, and presequence peptides; clearance of these peptides is required to keep the presequence processing machinery running. Preferentially cleaves the N-terminal side of paired basic amino acid residues. Also degrades other unstructured peptides. May function as an ATP-dependent peptidase as opposed to a metalloendopeptidase. The sequence is that of Presequence protease, mitochondrial (CYM1) from Gibberella zeae (strain ATCC MYA-4620 / CBS 123657 / FGSC 9075 / NRRL 31084 / PH-1) (Wheat head blight fungus).